Consider the following 388-residue polypeptide: Succinate--CoA ligase [ADP-forming] subunit beta (388 aa).

Residues 9 to 244 (KQLFARYGLP…QSQEDPREAQ (236 aa)) enclose the ATP-grasp domain. Residues Lys-46, 53-55 (GRG), Glu-99, Thr-102, and Glu-107 contribute to the ATP site. Positions 199 and 213 each coordinate Mg(2+). Residues Asn-264 and 321–323 (GIV) contribute to the substrate site.

It belongs to the succinate/malate CoA ligase beta subunit family. In terms of assembly, heterotetramer of two alpha and two beta subunits. It depends on Mg(2+) as a cofactor.

It catalyses the reaction succinate + ATP + CoA = succinyl-CoA + ADP + phosphate. It carries out the reaction GTP + succinate + CoA = succinyl-CoA + GDP + phosphate. It functions in the pathway carbohydrate metabolism; tricarboxylic acid cycle; succinate from succinyl-CoA (ligase route): step 1/1. Its function is as follows. Succinyl-CoA synthetase functions in the citric acid cycle (TCA), coupling the hydrolysis of succinyl-CoA to the synthesis of either ATP or GTP and thus represents the only step of substrate-level phosphorylation in the TCA. The beta subunit provides nucleotide specificity of the enzyme and binds the substrate succinate, while the binding sites for coenzyme A and phosphate are found in the alpha subunit. The protein is Succinate--CoA ligase [ADP-forming] subunit beta of Escherichia coli O139:H28 (strain E24377A / ETEC).